The primary structure comprises 87 residues: MANIKSAKKRAVQSEKRRKHNASSRSMMRTFIKKVYAAIATGDKEVAQKAFNDMQPIVDRQASKGLIHKNKAARHKSNLVARINAMQ.

The segment covering 1-22 (MANIKSAKKRAVQSEKRRKHNA) has biased composition (basic residues). Residues 1 to 27 (MANIKSAKKRAVQSEKRRKHNASSRSM) form a disordered region.

It belongs to the bacterial ribosomal protein bS20 family.

Its function is as follows. Binds directly to 16S ribosomal RNA. This chain is Small ribosomal subunit protein bS20, found in Pectobacterium atrosepticum (strain SCRI 1043 / ATCC BAA-672) (Erwinia carotovora subsp. atroseptica).